A 235-amino-acid polypeptide reads, in one-letter code: Protein MAINTENANCE OF PSII UNDER HIGH LIGHT 1 (235 aa).

The chain crosses the membrane as a helical span at residues 127–147 (TAAIVAGIALIAVAAASSILL). A disordered region spans residues 181–235 (QPSTPSVTEAPPVAELETSLPETPSVAQQETSLPETMASEAQPEASSVPTTSSTS). Polar residues-rich tracts occupy residues 200–214 (LPET…TSLP) and 224–235 (EASSVPTTSSTS).

As to quaternary structure, interacts with psbA, psbB, psbC and psbD.

It is found in the plastid. Its subcellular location is the chloroplast thylakoid membrane. Interacts with photosystem II (PSII) core complexes and participates in the maintenance of normal PSII activity under photoinhibitory stress. May protect against photodamage or stabilize PSII under high-light stress. Participates in the maintainance of proper PSII function under high-light stress by protecting PSII from photooxidative damage. This Arabidopsis thaliana (Mouse-ear cress) protein is Protein MAINTENANCE OF PSII UNDER HIGH LIGHT 1.